The primary structure comprises 740 residues: 1,4-alpha-glucan branching enzyme GlgB (740 aa).

The Nucleophile role is filled by Asp-414. The Proton donor role is filled by Glu-467.

The protein belongs to the glycosyl hydrolase 13 family. GlgB subfamily. As to quaternary structure, monomer.

It catalyses the reaction Transfers a segment of a (1-&gt;4)-alpha-D-glucan chain to a primary hydroxy group in a similar glucan chain.. Its pathway is glycan biosynthesis; glycogen biosynthesis. Functionally, catalyzes the formation of the alpha-1,6-glucosidic linkages in glycogen by scission of a 1,4-alpha-linked oligosaccharide from growing alpha-1,4-glucan chains and the subsequent attachment of the oligosaccharide to the alpha-1,6 position. This Rhodospirillum rubrum (strain ATCC 11170 / ATH 1.1.1 / DSM 467 / LMG 4362 / NCIMB 8255 / S1) protein is 1,4-alpha-glucan branching enzyme GlgB.